The primary structure comprises 274 residues: Undecaprenyl-diphosphatase (274 aa).

6 helical membrane passes run 44-64, 85-105, 109-129, 185-205, 215-235, and 250-270; these read AKVFDIAIQTGAIFAVILVYW, LNVLIGFLPAVLLGLLLGKAI, LFTPVVVASTFILGGFVILWA, ATDYSFFLAIPTLIGAGVYSL, ADIPLFAVGLVFSFISAWLCV, and FAWYRIAFGLVVLVTAWSGLV.

The protein belongs to the UppP family.

Its subcellular location is the cell inner membrane. The catalysed reaction is di-trans,octa-cis-undecaprenyl diphosphate + H2O = di-trans,octa-cis-undecaprenyl phosphate + phosphate + H(+). Its function is as follows. Catalyzes the dephosphorylation of undecaprenyl diphosphate (UPP). Confers resistance to bacitracin. This chain is Undecaprenyl-diphosphatase, found in Acidovorax ebreus (strain TPSY) (Diaphorobacter sp. (strain TPSY)).